A 467-amino-acid polypeptide reads, in one-letter code: Argininosuccinate lyase (467 aa).

The protein belongs to the lyase 1 family. Argininosuccinate lyase subfamily.

The protein resides in the cytoplasm. The enzyme catalyses 2-(N(omega)-L-arginino)succinate = fumarate + L-arginine. The protein operates within amino-acid biosynthesis; L-arginine biosynthesis; L-arginine from L-ornithine and carbamoyl phosphate: step 3/3. This chain is Argininosuccinate lyase, found in Nitrosococcus oceani (strain ATCC 19707 / BCRC 17464 / JCM 30415 / NCIMB 11848 / C-107).